Consider the following 69-residue polypeptide: Brevinin-1Pb (69 aa).

The N-terminal stretch at Met-1–Ser-20 is a signal peptide. Positions Phe-21–Glu-43 are excised as a propeptide. Cys-63 and Cys-69 are disulfide-bonded.

As to expression, expressed by the skin glands.

The protein localises to the secreted. Its function is as follows. Antibacterial activity against Gram-positive bacterium S.aureus and Gram-negative bacterium E.coli. Has activity against C.albicans. This is Brevinin-1Pb from Lithobates pipiens (Northern leopard frog).